Consider the following 375-residue polypeptide: 1-deoxy-D-xylulose 5-phosphate reductoisomerase (375 aa).

The NADPH site is built by Thr10, Gly11, Ser12, Val13, Lys37, and Asn114. Lys115 is a 1-deoxy-D-xylulose 5-phosphate binding site. Glu116 serves as a coordination point for NADPH. Asp136 serves as a coordination point for Mn(2+). Residues Ser137, Glu138, Ser162, and His185 each coordinate 1-deoxy-D-xylulose 5-phosphate. Glu138 serves as a coordination point for Mn(2+). Gly191 is an NADPH binding site. Residues Ser198, Asn203, Lys204, and Glu207 each contribute to the 1-deoxy-D-xylulose 5-phosphate site. Glu207 contributes to the Mn(2+) binding site.

This sequence belongs to the DXR family. Mg(2+) serves as cofactor. Requires Mn(2+) as cofactor.

It catalyses the reaction 2-C-methyl-D-erythritol 4-phosphate + NADP(+) = 1-deoxy-D-xylulose 5-phosphate + NADPH + H(+). It functions in the pathway isoprenoid biosynthesis; isopentenyl diphosphate biosynthesis via DXP pathway; isopentenyl diphosphate from 1-deoxy-D-xylulose 5-phosphate: step 1/6. Its function is as follows. Catalyzes the NADPH-dependent rearrangement and reduction of 1-deoxy-D-xylulose-5-phosphate (DXP) to 2-C-methyl-D-erythritol 4-phosphate (MEP). This chain is 1-deoxy-D-xylulose 5-phosphate reductoisomerase, found in Sulfurihydrogenibium sp. (strain YO3AOP1).